Consider the following 730-residue polypeptide: Hepatocyte growth factor (730 aa).

A signal peptide spans 1–31; the sequence is MWVTRLLPVLLLQHVLLHLLLLPIAIPYAEG. A Pyrrolidone carboxylic acid modification is found at Gln-32. The region spanning 37–123 is the PAN domain; the sequence is NTLHEFKRSA…HEFDLYENKD (87 aa). Cystine bridges form between Cys-70–Cys-96, Cys-74–Cys-84, Cys-128–Cys-206, Cys-149–Cys-189, Cys-177–Cys-201, Cys-211–Cys-288, Cys-232–Cys-271, and Cys-260–Cys-283. 2 Kringle domains span residues 128–206 and 211–288; these read CIIG…IPQC and CMTC…IKMC. N-linked (GlcNAc...) asparagine glycosylation occurs at Asn-294. Intrachain disulfides connect Cys-305-Cys-383, Cys-326-Cys-365, Cys-354-Cys-377, Cys-391-Cys-469, Cys-412-Cys-452, Cys-440-Cys-464, Cys-487-Cys-606, Cys-519-Cys-535, Cys-614-Cys-681, Cys-644-Cys-660, and Cys-671-Cys-699. 2 Kringle domains span residues 305–383 and 391–469; these read CIQG…IPKC and CYRG…ISRC. In terms of domain architecture, Peptidase S1 spans 495 to 723; sequence VVNGIPTRTN…YAKWIHKIIL (229 aa). N-linked (GlcNAc...) asparagine glycans are attached at residues Asn-568 and Asn-655.

This sequence belongs to the peptidase S1 family. Plasminogen subfamily. Dimer of an alpha chain and a beta chain linked by a disulfide bond. Interacts with SRPX2; the interaction increases HGF mitogenic activity. The single-chain precursor undergoes proteolytic processing by TMPRSS13 resulting in an active two-chain form. The single-chain precursor undergoes proteolytic processing by HGFAC resulting in an active two-chain form.

Functionally, potent mitogen for mature parenchymal hepatocyte cells, seems to be a hepatotrophic factor, and acts as a growth factor for a broad spectrum of tissues and cell types. Activating ligand for the receptor tyrosine kinase MET by binding to it and promoting its dimerization. Activates MAPK signaling following TMPRSS13 cleavage and activation. The sequence is that of Hepatocyte growth factor (HGF) from Bos taurus (Bovine).